The sequence spans 139 residues: 3-hydroxyacyl-[acyl-carrier-protein] dehydratase FabZ (139 aa).

The active site involves H46.

The protein belongs to the thioester dehydratase family. FabZ subfamily.

It localises to the cytoplasm. It carries out the reaction a (3R)-hydroxyacyl-[ACP] = a (2E)-enoyl-[ACP] + H2O. Its function is as follows. Involved in unsaturated fatty acids biosynthesis. Catalyzes the dehydration of short chain beta-hydroxyacyl-ACPs and long chain saturated and unsaturated beta-hydroxyacyl-ACPs. The sequence is that of 3-hydroxyacyl-[acyl-carrier-protein] dehydratase FabZ from Streptococcus pyogenes serotype M3 (strain ATCC BAA-595 / MGAS315).